The primary structure comprises 535 residues: MKKNLTWKVVVIVAVLLVFAFGIIGNPAEVKWDKEGLKTALMNRIHLGLDLRGGTHLILQVVVNDAVNAETDRAIERIKEDLANNKVTYSDITKPDAANAPERIAIKGITPDGATTLRRVSDERLPEYSFGSGPEGSYTLTMKPAQLKDLKDRAVQQAIQKIRERVDSLGVSEPVIQEHGLGDYQILVQLPGVDDPARVKEVMQSTAMLEIRQVFGGPYSKESEAAQGQMQQPDTVVLPGKSESDPGTQVFYLVARSSAVAGHDLRQARVGRDQNGGANVQFNLTRDGGVRFSQFTSAHVGDKLGVILDGKVMEVANIKSEISDSGEIEGRFTDQQASDLALILNSGALPASIKYLEERTVGPSLGMDSIRQGVRAAIIGFVAVIIFMLIYYKGAGINADLSLLLNLVILLGFMGYFGAVLTLPGIAGVILTVGMGVDSNVLIFERIREELRNGKTPPSAVEQGFGHAWLTIIDTHVTTIVSAIILFLFGTGPVKGFAVTLSFGLFANLFTAVFVSRVIFDSILNRHQRGEALSI.

Transmembrane regions (helical) follow at residues 5–25 (LTWKVVVIVAVLLVFAFGIIG), 377–397 (AIIGFVAVIIFMLIYYKGAGI), 402–421 (SLLLNLVILLGFMGYFGAVL), 425–444 (GIAGVILTVGMGVDSNVLIF), 469–489 (WLTIIDTHVTTIVSAIILFLF), and 496–516 (GFAVTLSFGLFANLFTAVFVS).

Belongs to the SecD/SecF family. SecD subfamily. Forms a complex with SecF. Part of the essential Sec protein translocation apparatus which comprises SecA, SecYEG and auxiliary proteins SecDF. Other proteins may also be involved.

Its subcellular location is the cell inner membrane. Part of the Sec protein translocase complex. Interacts with the SecYEG preprotein conducting channel. SecDF uses the proton motive force (PMF) to complete protein translocation after the ATP-dependent function of SecA. This chain is Protein translocase subunit SecD, found in Koribacter versatilis (strain Ellin345).